Reading from the N-terminus, the 538-residue chain is Putative cysteine ligase BshC (538 aa).

A coiled-coil region spans residues 462-533 (LDHLEKRLLK…DPLESNFKIL (72 aa)).

The protein belongs to the BshC family.

This Christiangramia forsetii (strain DSM 17595 / CGMCC 1.15422 / KT0803) (Gramella forsetii) protein is Putative cysteine ligase BshC.